The sequence spans 77 residues: RNA-binding protein Hfq (77 aa).

A Sm domain is found at 10-70; it reads DIFLNSARKN…ITTVTPEKPI (61 aa).

Belongs to the Hfq family. Homohexamer.

Functionally, RNA chaperone that binds small regulatory RNA (sRNAs) and mRNAs to facilitate mRNA translational regulation in response to envelope stress, environmental stress and changes in metabolite concentrations. Also binds with high specificity to tRNAs. This chain is RNA-binding protein Hfq, found in Clostridium botulinum (strain Eklund 17B / Type B).